Here is a 156-residue protein sequence, read N- to C-terminus: ATP synthase subunit b (156 aa).

A helical transmembrane segment spans residues 12–32; it reads LAFAIFVWFCMKLVWPPITAA.

This sequence belongs to the ATPase B chain family. F-type ATPases have 2 components, F(1) - the catalytic core - and F(0) - the membrane proton channel. F(1) has five subunits: alpha(3), beta(3), gamma(1), delta(1), epsilon(1). F(0) has three main subunits: a(1), b(2) and c(10-14). The alpha and beta chains form an alternating ring which encloses part of the gamma chain. F(1) is attached to F(0) by a central stalk formed by the gamma and epsilon chains, while a peripheral stalk is formed by the delta and b chains.

The protein localises to the cell inner membrane. In terms of biological role, f(1)F(0) ATP synthase produces ATP from ADP in the presence of a proton or sodium gradient. F-type ATPases consist of two structural domains, F(1) containing the extramembraneous catalytic core and F(0) containing the membrane proton channel, linked together by a central stalk and a peripheral stalk. During catalysis, ATP synthesis in the catalytic domain of F(1) is coupled via a rotary mechanism of the central stalk subunits to proton translocation. Component of the F(0) channel, it forms part of the peripheral stalk, linking F(1) to F(0). This is ATP synthase subunit b from Stutzerimonas stutzeri (strain A1501) (Pseudomonas stutzeri).